A 950-amino-acid polypeptide reads, in one-letter code: MTETPTAQPDRAADADTPQHRYTAELAGQIEGAWQQTWAVEGTFNVPNPVGELAPPDGTVPADKMFVQDMFPYPSGEGLHVGHPLGYIATDVYARYYRMTGRNVLHALGFDAFGLPAEQYAVQTGTHPRTRTEANIVNFRRQLGRLGLGHDTRRSFSTTDVDFYTWTQWIFLQIYNAWFDRDANRARPIAELIGEFESGVRTLDDGRPWSELSAGERADVVDSYRLVYRADSMVNWCPGLGTVLANEEVTADGRSDRGNFPVFRKRLRQWMMRITAYSDRLLEDLEVLDWPDKVKTMQRNWIGRSTGASVQFGTDAGDIEVFTTRPDTLFGATYLVLAPEHPLVEQLAAEQWPDDVDGRWTFGATTPREAVAAYRASIAAKSDLERQENKTKTGAFLGAYATNPANGQQVPIFIADYVLIGYGTGAIMAVPGHDQRDWEFAHEFGLPVVEVISGGDISEAAYAGDGLLVNSDYLDGLDVAAAKAAITDRLVADGRGRARVEYKLRDWLFARQRYWGEPFPIVYDSDGRPHPLPESALPVELPDVPDYSPVLFDPDDADSEPNPPLNKATDWVHVELDLGDGLQTYTRDTNVMPQWAGSSWYELRYTDPLNKEALCAKENEAYWMGPQPAEHGPDDPGGVDLYVGGVEHAVLHLLYSRFWHKVLYDLGHVSSREPYRRLVNQGYIQAFAYTDSRGSYVPAAEVVERDGKFWFEGAEVFQEFGKIGKSLKNSVSPDEICDNYGADTLRVYEMSMGPLEASRPWATKDVVGAHRFLQRVWRLVVDEQSGAVRVANHEALDTDTLRALHRTVAGVSEDYAALRNNTAAAKLIEYTNHLTKEGVTARAAIEPLVLMVAPLAPHLAEELWRRLGHDTSLAHGPFPVADPQYLVTDTVEYPVQVNGKVRSRITVDADAGKDTLEAAALADEKVQAFLNGATPKKVIVVPGRLVNLVV.

The 'HIGH' region motif lies at 72 to 83; that stretch reads PYPSGEGLHVGH. The short motif at 722–726 is the 'KMSKS' region element; the sequence is KIGKS. Lys-725 contacts ATP.

It belongs to the class-I aminoacyl-tRNA synthetase family.

The protein localises to the cytoplasm. The enzyme catalyses tRNA(Leu) + L-leucine + ATP = L-leucyl-tRNA(Leu) + AMP + diphosphate. This Mycobacterium sp. (strain KMS) protein is Leucine--tRNA ligase.